The sequence spans 190 residues: MRLRFSLLLTVSLLAGCASAPPATLQHRDNIRDFSLEGRFALRVAMPDQAPQSSGGRLSWTHRNRSDRVLLSSPLGYGLAEIETTPELSRLRTAEGKQSESTDPDTLIEEVTGQRLPVTRMPAWLLGRSGGKAQIFNDPIGRPGKLLEDGWQVDYTYDDEAPAALPSRLNISRDGEIELKLRIEEWKETP.

The N-terminal stretch at 1–16 (MRLRFSLLLTVSLLAG) is a signal peptide. Cysteine 17 carries the N-palmitoyl cysteine lipid modification. Residue cysteine 17 is the site of S-diacylglycerol cysteine attachment.

The protein belongs to the LolB family. Monomer.

It is found in the cell outer membrane. Plays a critical role in the incorporation of lipoproteins in the outer membrane after they are released by the LolA protein. This Dechloromonas aromatica (strain RCB) protein is Outer-membrane lipoprotein LolB.